Reading from the N-terminus, the 123-residue chain is Small ribosomal subunit protein uS12 (123 aa).

Residue Asp89 is modified to 3-methylthioaspartic acid.

The protein belongs to the universal ribosomal protein uS12 family. Part of the 30S ribosomal subunit. Contacts proteins S8 and S17. May interact with IF1 in the 30S initiation complex.

Functionally, with S4 and S5 plays an important role in translational accuracy. In terms of biological role, interacts with and stabilizes bases of the 16S rRNA that are involved in tRNA selection in the A site and with the mRNA backbone. Located at the interface of the 30S and 50S subunits, it traverses the body of the 30S subunit contacting proteins on the other side and probably holding the rRNA structure together. The combined cluster of proteins S8, S12 and S17 appears to hold together the shoulder and platform of the 30S subunit. In Brucella anthropi (strain ATCC 49188 / DSM 6882 / CCUG 24695 / JCM 21032 / LMG 3331 / NBRC 15819 / NCTC 12168 / Alc 37) (Ochrobactrum anthropi), this protein is Small ribosomal subunit protein uS12.